The chain runs to 914 residues: DNA mismatch repair protein MutS (914 aa).

The tract at residues 1–25 (MDKKNDHKNNLIPQPASSFASSQER) is disordered. Positions 11–25 (LIPQPASSFASSQER) are enriched in polar residues. 662 to 669 (GPNMGGKS) provides a ligand contact to ATP.

It belongs to the DNA mismatch repair MutS family.

This protein is involved in the repair of mismatches in DNA. It is possible that it carries out the mismatch recognition step. This protein has a weak ATPase activity. The sequence is that of DNA mismatch repair protein MutS from Bartonella tribocorum (strain CIP 105476 / IBS 506).